A 754-amino-acid polypeptide reads, in one-letter code: 5-methyltetrahydropteroyltriglutamate--homocysteine methyltransferase (754 aa).

5-methyltetrahydropteroyltri-L-glutamate is bound by residues 17 to 20 and K117; that span reads RELK. L-homocysteine-binding positions include 431–433 and E484; that span reads IGS. L-methionine-binding positions include 431–433 and E484; that span reads IGS. Residues 515-516 and W561 contribute to the 5-methyltetrahydropteroyltri-L-glutamate site; that span reads RC. D599 provides a ligand contact to L-homocysteine. D599 provides a ligand contact to L-methionine. E605 contributes to the 5-methyltetrahydropteroyltri-L-glutamate binding site. Residues H641, C643, and E665 each coordinate Zn(2+). Residue H694 is the Proton donor of the active site. C726 contributes to the Zn(2+) binding site.

It belongs to the vitamin-B12 independent methionine synthase family. Zn(2+) serves as cofactor.

It catalyses the reaction 5-methyltetrahydropteroyltri-L-glutamate + L-homocysteine = tetrahydropteroyltri-L-glutamate + L-methionine. It functions in the pathway amino-acid biosynthesis; L-methionine biosynthesis via de novo pathway; L-methionine from L-homocysteine (MetE route): step 1/1. In terms of biological role, catalyzes the transfer of a methyl group from 5-methyltetrahydrofolate to homocysteine resulting in methionine formation. This Salmonella paratyphi A (strain ATCC 9150 / SARB42) protein is 5-methyltetrahydropteroyltriglutamate--homocysteine methyltransferase.